A 421-amino-acid chain; its full sequence is Lipid II:glycine glycyltransferase (421 aa).

It belongs to the FemABX family. In terms of assembly, monomer.

The protein localises to the cytoplasm. It carries out the reaction beta-D-GlcNAc-(1-&gt;4)-Mur2Ac(oyl-L-Ala-D-isoglutaminyl-L-Lys-D-Ala-D-Ala)-di-trans,octa-cis-undecaprenyl diphosphate + glycyl-tRNA(Gly) = beta-D-GlcNAc-(1-&gt;4)-Mur2Ac(oyl-L-Ala-D-isoglutaminyl-L-Lys-(N(6)-Gly)-D-Ala-D-Ala)-di-trans,octa-cis-undecaprenyl diphosphate + tRNA(Gly) + H(+). Catalyzes the incorporation of the first glycine of the pentaglycine interpeptide bridge, which is characteristic of the S.aureus peptidoglycan. This glycine is added to the epsilon-amino group of the L-lysine of the membrane-bound lipid II intermediate (GlcNAc-(beta-1,4)-N-acetylmuramic acid(-L-Ala-D-iGln-L-Lys-D-Ala-D-Ala)-pyrophosphoryl-undecaprenol), using glycyl-tRNA(Gly) as donor, in a ribosome-independent mechanism. This Staphylococcus aureus (strain MSSA476) protein is Lipid II:glycine glycyltransferase (femX).